Here is a 268-residue protein sequence, read N- to C-terminus: AN1-type zinc finger protein 1 (268 aa).

Residue A2 is modified to N-acetylalanine. 2 AN1-type zinc fingers span residues 4-52 (LDIG…VINE) and 58-106 (QHTS…IPKP). Zn(2+) is bound by residues C10, C15, C25, C28, C33, H36, H42, C44, C64, C69, C79, C82, C87, H90, H96, and C98. A ubiquitin-like region spans residues 160–260 (QTERIYFQVF…EYLNDEEQFC (101 aa)).

As to quaternary structure, associates with the 26S proteasome; this association occurs upon exposure to arsenite and is reduced in the presence of ATP. Interacts (via AN1-type 1 and 2 zinc fingers) with PSMD1; this interaction is increased upon arsenite treatment and occurs in an ATP-independent manner. Interacts with PSMC4. Interacts with PSMA1. Interacts (via its ubiquitin-like region) with VCP; this interaction occurs in an arsenite-dependent manner and is necessary for the recruitment of the ubiquitin-selective ATPase VCP to stress granules (SGs).

It localises to the cytoplasm. The protein resides in the stress granule. Functionally, plays a role in the regulation of cytoplasmic stress granules (SGs) turnover. SGs are dynamic and transient cytoplasmic ribonucleoprotein assemblies important for cellular protein homeostasis when protein production is suspended after acute exogenous stress. Associates with SGs and is involved in the efficient and specific arsenite-induced clearance process of SGs through the recruitment of the ubiquitin-selective ATPase VCP and the 26S proteasome. This process requires both complexes for efficient degradation of damaged ubiquitinated SG proteins during recovery from arsenite stress, and hence avoiding aberrant cytoplasmic SGs degradation via autophagy. This chain is AN1-type zinc finger protein 1, found in Homo sapiens (Human).